Reading from the N-terminus, the 339-residue chain is Scoulerine-9-O-methyltransferase 3 (339 aa).

Met-161 contacts S-adenosyl-L-methionine. A substrate-binding site is contributed by Asp-164. Residues Thr-165, Gly-191, Asp-214, 228-229 (DV), and Lys-242 contribute to the S-adenosyl-L-methionine site. 243 to 247 (SILHE) contacts substrate. His-246 (proton acceptor) is an active-site residue.

This sequence belongs to the class I-like SAM-binding methyltransferase superfamily. Cation-independent O-methyltransferase family. COMT subfamily. Homodimer. Forms heterodimer with SOMT2. The heterodimer SOMT2-SOMT3 possesses 3-O-acetyl-4'-O-demethylpapaveroxine 4'-O-methyltransferase activity, where SOMT2 is the catalytic subunit. In terms of tissue distribution, highly expressed in capsules. Expressed is stems. Expressed at low levels in roots.

The catalysed reaction is (S)-scoulerine + S-adenosyl-L-methionine = (S)-tetrahydrocolumbamine + S-adenosyl-L-homocysteine + H(+). Its pathway is alkaloid biosynthesis. Methyltransferase involved in the biosynthesis of the benzylisoquinoline alkaloid noscapine. Catalyzes the conversion of (S)-scoulerine to (S)-tetrahydrocolumbamine. The protein is Scoulerine-9-O-methyltransferase 3 of Papaver somniferum (Opium poppy).